Reading from the N-terminus, the 239-residue chain is Ribonuclease PH (239 aa).

Residues Arg-86 and 124–126 (GTR) each bind phosphate.

This sequence belongs to the RNase PH family. Homohexameric ring arranged as a trimer of dimers.

The enzyme catalyses tRNA(n+1) + phosphate = tRNA(n) + a ribonucleoside 5'-diphosphate. Functionally, phosphorolytic 3'-5' exoribonuclease that plays an important role in tRNA 3'-end maturation. Removes nucleotide residues following the 3'-CCA terminus of tRNAs; can also add nucleotides to the ends of RNA molecules by using nucleoside diphosphates as substrates, but this may not be physiologically important. Probably plays a role in initiation of 16S rRNA degradation (leading to ribosome degradation) during starvation. The chain is Ribonuclease PH from Cupriavidus necator (strain ATCC 17699 / DSM 428 / KCTC 22496 / NCIMB 10442 / H16 / Stanier 337) (Ralstonia eutropha).